Consider the following 522-residue polypeptide: Hydroxymethylglutaryl-CoA synthase, cytoplasmic (522 aa).

Positions 43 and 44 each coordinate (3S)-3-hydroxy-3-methylglutaryl-CoA. Glu95 serves as the catalytic Proton donor/acceptor. (3S)-3-hydroxy-3-methylglutaryl-CoA contacts are provided by Cys129, Asn167, Thr171, Ser221, His264, Lys273, Asn344, and Ser378. Cys129 (acyl-thioester intermediate) is an active-site residue. The active-site Proton donor/acceptor is His264.

Belongs to the thiolase-like superfamily. HMG-CoA synthase family. Homodimer.

The protein localises to the cytoplasm. It carries out the reaction acetoacetyl-CoA + acetyl-CoA + H2O = (3S)-3-hydroxy-3-methylglutaryl-CoA + CoA + H(+). It functions in the pathway metabolic intermediate biosynthesis; (R)-mevalonate biosynthesis; (R)-mevalonate from acetyl-CoA: step 2/3. Catalyzes the condensation of acetyl-CoA with acetoacetyl-CoA to form HMG-CoA, which is converted by HMG-CoA reductase (HMGCR) into mevalonate, a precursor for cholesterol synthesis. The polypeptide is Hydroxymethylglutaryl-CoA synthase, cytoplasmic (HMGCS1) (Gallus gallus (Chicken)).